A 290-amino-acid polypeptide reads, in one-letter code: Phosphatidylserine decarboxylase proenzyme (290 aa).

Residues D96, H153, and S257 each act as charge relay system; for autoendoproteolytic cleavage activity in the active site. S257 acts as the Schiff-base intermediate with substrate; via pyruvic acid; for decarboxylase activity in catalysis. S257 bears the Pyruvic acid (Ser); by autocatalysis mark.

It belongs to the phosphatidylserine decarboxylase family. PSD-B subfamily. Prokaryotic type I sub-subfamily. In terms of assembly, heterodimer of a large membrane-associated beta subunit and a small pyruvoyl-containing alpha subunit. Pyruvate serves as cofactor. Post-translationally, is synthesized initially as an inactive proenzyme. Formation of the active enzyme involves a self-maturation process in which the active site pyruvoyl group is generated from an internal serine residue via an autocatalytic post-translational modification. Two non-identical subunits are generated from the proenzyme in this reaction, and the pyruvate is formed at the N-terminus of the alpha chain, which is derived from the carboxyl end of the proenzyme. The autoendoproteolytic cleavage occurs by a canonical serine protease mechanism, in which the side chain hydroxyl group of the serine supplies its oxygen atom to form the C-terminus of the beta chain, while the remainder of the serine residue undergoes an oxidative deamination to produce ammonia and the pyruvoyl prosthetic group on the alpha chain. During this reaction, the Ser that is part of the protease active site of the proenzyme becomes the pyruvoyl prosthetic group, which constitutes an essential element of the active site of the mature decarboxylase.

The protein resides in the cell membrane. The enzyme catalyses a 1,2-diacyl-sn-glycero-3-phospho-L-serine + H(+) = a 1,2-diacyl-sn-glycero-3-phosphoethanolamine + CO2. Its pathway is phospholipid metabolism; phosphatidylethanolamine biosynthesis; phosphatidylethanolamine from CDP-diacylglycerol: step 2/2. In terms of biological role, catalyzes the formation of phosphatidylethanolamine (PtdEtn) from phosphatidylserine (PtdSer). The chain is Phosphatidylserine decarboxylase proenzyme from Haemophilus influenzae (strain 86-028NP).